A 319-amino-acid chain; its full sequence is Acetyl esterase (319 aa).

Positions 91-93 match the Involved in the stabilization of the negatively charged intermediate by the formation of the oxyanion hole motif; the sequence is HGG. Catalysis depends on residues S165, D262, and H292.

It belongs to the 'GDXG' lipolytic enzyme family. In terms of assembly, homodimer. Interacts with MalT and MelA.

It is found in the cytoplasm. In terms of biological role, displays esterase activity towards short chain fatty esters (acyl chain length of up to 8 carbons). Able to hydrolyze triacetylglycerol (triacetin) and tributyrylglycerol (tributyrin), but not trioleylglycerol (triolein) or cholesterol oleate. Negatively regulates MalT activity by antagonizing maltotriose binding. Inhibits MelA galactosidase activity. This is Acetyl esterase from Shigella boydii serotype 4 (strain Sb227).